A 2144-amino-acid polypeptide reads, in one-letter code: Reducing polyketide synthase PKS2 (2144 aa).

One can recognise a Ketosynthase family 3 (KS3) domain in the interval 10–436 (PMPLAIIGMS…GSNSHCIVRA (427 aa)). Active-site for beta-ketoacyl synthase activity residues include Cys183, His319, and His360. A malonyl-CoA:ACP transacylase (MAT) region spans residues 538-855 (VFAFTGQGAQ…VPSLHRGQNA (318 aa)). The segment at 924-1058 (HDLLGSINSS…ALVKCEATTD (135 aa)) is N-terminal hotdog fold. The segment at 924–1214 (HDLLGSINSS…RSYSIDGTTD (291 aa)) is dehydratase (DH) domain. One can recognise a PKS/mFAS DH domain in the interval 924–1237 (HDLLGSINSS…LAVEATLAPQ (314 aa)). The segment at 1076–1237 (HSCVGSPLLY…LAVEATLAPQ (162 aa)) is C-terminal hotdog fold. The enoyl reductase (ER) domain stretch occupies residues 1461–1747 (GMPDSLYLQR…SETDSKKLLL (287 aa)). Positions 1771-1948 (AVYLLVGGSG…PATSLALTAV (178 aa)) are ketoreductase (KR) domain. The 78-residue stretch at 2059 to 2136 (EATQLLLAAI…KIVDSVIVKR (78 aa)) folds into the Carrier domain. O-(pantetheine 4'-phosphoryl)serine is present on Ser2096.

Its pathway is mycotoxin biosynthesis. Its function is as follows. Reducing polyketide synthase (PKS); part of the Tox1A locus, one of the 2 loci that mediate the biosynthesis of T-toxin, a family of linear polyketides 37 to 45 carbons in length, of which the major component is 41 carbons, and which leads to high virulence to maize. One of the PKSs (PKS1 or PKS2) could synthesize a precursor, used subsequently by the other PKS as starter unit, to add additional carbons. Variability in the length of the final carbon backbone C35-47 could be achieved by varying the number of condensation cycles, or use of different starter or extender units or might be due to decarboxylation of the penultimate product, catalyzed by DEC1. Additional proteins are required for the biosynthesis of T-toxin, including oxidoreductases RED1, RED2, RED3, LAM1 and OXI1, as well as esterase TOX9. This is Reducing polyketide synthase PKS2 from Cochliobolus heterostrophus (strain C4 / ATCC 48331 / race T) (Southern corn leaf blight fungus).